The sequence spans 650 residues: ATP-dependent DNA helicase PIF1 (650 aa).

Positions 14–192 (MPSSTEAATD…ALEKRPMESQ (179 aa)) are PINT. Serine 40 and serine 164 each carry phosphoserine. A disordered region spans residues 171–199 (LQRAAATKAPDSALEKRPMESQTSTEAPR). Position 237 to 244 (237 to 244 (GSAGTGKS)) interacts with ATP. The DNA-binding element occupies 586-605 (QAYVALSRARSLQGLRVLDF). The segment at 631-650 (LESQDDEEANSDLENMDPNL) is disordered. Residues 633–650 (SQDDEEANSDLENMDPNL) show a composition bias toward acidic residues.

The protein belongs to the helicase family. PIF1 subfamily. As to quaternary structure, monomer. Interacts with telomerase. The cofactor is Mg(2+).

It localises to the nucleus. The protein resides in the mitochondrion. The enzyme catalyses Couples ATP hydrolysis with the unwinding of duplex DNA at the replication fork by translocating in the 5'-3' direction. This creates two antiparallel DNA single strands (ssDNA). The leading ssDNA polymer is the template for DNA polymerase III holoenzyme which synthesizes a continuous strand.. It carries out the reaction ATP + H2O = ADP + phosphate + H(+). DNA-dependent ATPase and 5'-3' DNA helicase required for the maintenance of both mitochondrial and nuclear genome stability. Efficiently unwinds G-quadruplex (G4) DNA structures and forked RNA-DNA hybrids. Resolves G4 structures, preventing replication pausing and double-strand breaks (DSBs) at G4 motifs. Involved in the maintenance of telomeric DNA. Inhibits telomere elongation, de novo telomere formation and telomere addition to DSBs via catalytic inhibition of telomerase. Reduces the processivity of telomerase by displacing active telomerase from DNA ends. Releases telomerase by unwinding the short telomerase RNA/telomeric DNA hybrid that is the intermediate in the telomerase reaction. Possesses an intrinsic strand annealing activity. The protein is ATP-dependent DNA helicase PIF1 of Mus musculus (Mouse).